The sequence spans 1027 residues: Circadian locomoter output cycles protein kaput (1027 aa).

The 51-residue stretch at 15–65 folds into the bHLH domain; that stretch reads LCRKSRNLSEKKRRDQFNSLVNDLSALISTSSRKMDKSTVLKSTIAFLKNH. PAS domains lie at 88–160 and 255–321; these read NDEY…VIEP and REMS…ELRQ. Disordered stretches follow at residues 377-402, 443-575, 765-800, 869-911, and 926-1027; these read RKEG…ASTG, TSPA…QQLQ, QQMM…TQQQ, TINP…NNED, and SINF…GSSQ. Positions 383-402 are enriched in low complexity; the sequence is SGNSNSITNNGSSKVIASTG. Positions 443–486 are enriched in polar residues; that stretch reads TSPAVDSSPMWSASAVQPSGSCQINPLKTSRPASSYGNISSTGI. Composition is skewed to low complexity over residues 504–516 and 552–575; these read SDST…SVTS and QQQQ…QQLQ. An implicated in the circadian rhythmicity region spans residues 780-1027; sequence QHNLQQQHQS…SPHTAPGSSQ (248 aa). 2 stretches are compositionally biased toward low complexity: residues 871–909 and 951–995; these read NPFN…QNNN and SGSN…NQNQ. Positions 1006–1027 are enriched in polar residues; the sequence is QMSQEQSQNLFNSPHTAPGSSQ.

As to quaternary structure, efficient DNA binding requires dimerization with another bHLH protein. Forms a heterodimer with Cycle. In terms of tissue distribution, widely expressed. Found in head, body, and appendage fractions.

Its subcellular location is the nucleus. In terms of biological role, circadian regulator that acts as a transcription factor and generates a rhythmic output with a period of about 24 hours. Oscillates in antiphase to the cycling observed for period (PER) and timeless (TIM). According to PubMed:9742131, reaches peak abundance within several hours of the dark-light transition at ZT0 (zeitgeber 0), whereas PubMed:9616122 describes bimodal oscillating expression with maximum at ZT5 and ZT23. Clock-cycle heterodimers activate cycling transcription of PER and TIM by binding to the E-box (5'-CACGTG-3') present in their promoters. Once induced, Period and Timeless block Clock's ability to transactivate their promoters. The sequence is that of Circadian locomoter output cycles protein kaput (Clk) from Drosophila melanogaster (Fruit fly).